The following is a 102-amino-acid chain: Co-chaperonin GroES (102 aa).

Belongs to the GroES chaperonin family. As to quaternary structure, heptamer of 7 subunits arranged in a ring. Interacts with the chaperonin GroEL.

It is found in the cytoplasm. Its function is as follows. Together with the chaperonin GroEL, plays an essential role in assisting protein folding. The GroEL-GroES system forms a nano-cage that allows encapsulation of the non-native substrate proteins and provides a physical environment optimized to promote and accelerate protein folding. GroES binds to the apical surface of the GroEL ring, thereby capping the opening of the GroEL channel. This chain is Co-chaperonin GroES, found in Streptomyces albus G.